The sequence spans 60 residues: MFAGLPSLTHEQQQQAVERIQELMSQGMSSGEAIAQVAQEIRATHQGDRIVARFEDDEEE.

Belongs to the UPF0181 family.

This is UPF0181 protein ESA_01442 from Cronobacter sakazakii (strain ATCC BAA-894) (Enterobacter sakazakii).